Consider the following 1464-residue polypeptide: Gag-Pol polyprotein (1464 aa).

The N-myristoyl glycine; by host moiety is linked to residue Gly2. Residues 7–31 (VLSGKKTDELEKVRLRPGGKKRYML) are interaction with Gp41. Residues 16 to 22 (LEKVRLR) carry the Nuclear export signal motif. The Nuclear localization signal motif lies at 26–32 (KKRYMLK). Tyr130 bears the Phosphotyrosine; by host mark. The interval 186 to 223 (NCVGEHQAAMQIIREIINEEAADWDQQHPSPGPMPAGQ) is interaction with human PPIA/CYPA and NUP153. Positions 274-360 (YNPTNILDIK…GGPGQKARLM (87 aa)) are dimerization/Multimerization of capsid protein p24. 2 CCHC-type zinc fingers span residues 387-404 (VTCW…QCKA) and 408-425 (QGCW…KCPE). Residues 483–499 (AKELHATREEAEGEQRE) are compositionally biased toward basic and acidic residues. The segment at 483-504 (AKELHATREEAEGEQRETLQGG) is disordered. Residues 511-515 (PQFSL) form a dimerization of protease region. One can recognise a Peptidase A2 domain in the interval 531-600 (EVLLDTGADD…PINIFGRNIL (70 aa)). The active-site For protease activity; shared with dimeric partner is Asp535. Dimerization of protease regions lie at residues 559–565 (GIGGFIN) and 598–610 (NILN…LNFP). The Reverse transcriptase domain maps to 654 to 844 (GQLEEAPPTN…PFKWMGYELW (191 aa)). Mg(2+) is bound by residues Asp719, Asp794, and Asp795. The segment at 836-844 (FKWMGYELW) is RT 'primer grip'. The Tryptophan repeat motif signature appears at 1006 to 1022 (WDQWWTDYWQVTWIPEW). The 124-residue stretch at 1042–1165 (LEGVETYYTD…VDHLVSQGIR (124 aa)) folds into the RNase H type-1 domain. Residues Asp1051, Glu1086, Asp1106, and Asp1157 each contribute to the Mg(2+) site. The segment at 1171 to 1212 (EKIEPAQEEHEKYHNNVKELVHKFGIPQLVARQIVNSCDKCQ) adopts an Integrase-type zinc-finger fold. 4 residues coordinate Zn(2+): His1180, His1184, Cys1208, and Cys1211. The 152-residue stretch at 1222 to 1373 (VNSELGTWQM…PAERIVNMIT (152 aa)) folds into the Integrase catalytic domain. Mg(2+) contacts are provided by Asp1232, Asp1284, and Glu1320. Residues 1391 to 1438 (FRVYYREGRDQLWKGPGDLLWKGEGAVIIKVGTEIKVIPRRKAKIIRN) constitute a DNA-binding region (integrase-type).

Homotrimer; further assembles as hexamers of trimers. Interacts with gp41 (via C-terminus). Interacts with host CALM1; this interaction induces a conformational change in the Matrix protein, triggering exposure of the myristate group. Interacts with host AP3D1; this interaction allows the polyprotein trafficking to multivesicular bodies during virus assembly. Part of the pre-integration complex (PIC) which is composed of viral genome, matrix protein, Vpr and integrase. In terms of assembly, homodimer; the homodimer further multimerizes as homohexamers or homopentamers. Interacts with human PPIA/CYPA. Interacts with human NUP153. Interacts with host PDZD8; this interaction stabilizes the capsid. Interacts with monkey TRIM5; this interaction destabilizes the capsid. As to quaternary structure, homodimer, whose active site consists of two apposed aspartic acid residues. Heterodimer of p66 RT and p51 RT (RT p66/p51). Heterodimerization of RT is essential for DNA polymerase activity. The overall folding of the subdomains is similar in p66 RT and p51 RT but the spatial arrangements of the subdomains are dramatically different. In terms of assembly, homotetramer; may further associate as a homohexadecamer. Part of the pre-integration complex (PIC) which is composed of viral genome, matrix protein, Vpr and integrase. Interacts with human SMARCB1/INI1 and human PSIP1/LEDGF isoform 1. Interacts with human KPNA3; this interaction might play a role in nuclear import of the pre-integration complex. Interacts with human NUP153; this interaction might play a role in nuclear import of the pre-integration complex. Requires Mg(2+) as cofactor. Post-translationally, specific enzymatic cleavages by the viral protease yield mature proteins. The protease is released by autocatalytic cleavage. The polyprotein is cleaved during and after budding, this process is termed maturation. Proteolytic cleavage of p66 RT removes the RNase H domain to yield the p51 RT subunit. Nucleocapsid protein p7 might be further cleaved after virus entry.

It localises to the host cell membrane. Its subcellular location is the host endosome. It is found in the host multivesicular body. The protein localises to the virion membrane. The protein resides in the host nucleus. It localises to the host cytoplasm. Its subcellular location is the virion. The catalysed reaction is Endopeptidase for which the P1 residue is preferably hydrophobic.. The enzyme catalyses Endohydrolysis of RNA in RNA/DNA hybrids. Three different cleavage modes: 1. sequence-specific internal cleavage of RNA. Human immunodeficiency virus type 1 and Moloney murine leukemia virus enzymes prefer to cleave the RNA strand one nucleotide away from the RNA-DNA junction. 2. RNA 5'-end directed cleavage 13-19 nucleotides from the RNA end. 3. DNA 3'-end directed cleavage 15-20 nucleotides away from the primer terminus.. It carries out the reaction 3'-end directed exonucleolytic cleavage of viral RNA-DNA hybrid.. It catalyses the reaction DNA(n) + a 2'-deoxyribonucleoside 5'-triphosphate = DNA(n+1) + diphosphate. Protease: The viral protease is inhibited by many synthetic protease inhibitors (PIs), such as amprenavir, atazanavir, indinavir, loprinavir, nelfinavir, ritonavir and saquinavir. Use of protease inhibitors in tritherapy regimens permit more ambitious therapeutic strategies. Reverse transcriptase/ribonuclease H: RT can be inhibited either by nucleoside RT inhibitors (NRTIs) or by non nucleoside RT inhibitors (NNRTIs). NRTIs act as chain terminators, whereas NNRTIs inhibit DNA polymerization by binding a small hydrophobic pocket near the RT active site and inducing an allosteric change in this region. Classical NRTIs are abacavir, adefovir (PMEA), didanosine (ddI), lamivudine (3TC), stavudine (d4T), tenofovir (PMPA), zalcitabine (ddC), and zidovudine (AZT). Classical NNRTIs are atevirdine (BHAP U-87201E), delavirdine, efavirenz (DMP-266), emivirine (I-EBU), and nevirapine (BI-RG-587). The tritherapies used as a basic effective treatment of AIDS associate two NRTIs and one NNRTI. Its function is as follows. Mediates, with Gag polyprotein, the essential events in virion assembly, including binding the plasma membrane, making the protein-protein interactions necessary to create spherical particles, recruiting the viral Env proteins, and packaging the genomic RNA via direct interactions with the RNA packaging sequence (Psi). Gag-Pol polyprotein may regulate its own translation, by the binding genomic RNA in the 5'-UTR. At low concentration, the polyprotein would promote translation, whereas at high concentration, the polyprotein would encapsidate genomic RNA and then shut off translation. Targets the polyprotein to the plasma membrane via a multipartite membrane-binding signal, that includes its myristoylated N-terminus. Matrix protein is part of the pre-integration complex. Implicated in the release from host cell mediated by Vpu. Binds to RNA. Functionally, forms the conical core that encapsulates the genomic RNA-nucleocapsid complex in the virion. Most core are conical, with only 7% tubular. The core is constituted by capsid protein hexamer subunits. The core is disassembled soon after virion entry. Host restriction factors such as TRIM5-alpha or TRIMCyp bind retroviral capsids and cause premature capsid disassembly, leading to blocks in reverse transcription. Capsid restriction by TRIM5 is one of the factors which restricts HIV-1 to the human species. Host PIN1 apparently facilitates the virion uncoating. On the other hand, interactions with PDZD8 or CYPA stabilize the capsid. In terms of biological role, encapsulates and protects viral dimeric unspliced genomic RNA (gRNA). Binds these RNAs through its zinc fingers. Acts as a nucleic acid chaperone which is involved in rearangement of nucleic acid secondary structure during gRNA retrotranscription. Also facilitates template switch leading to recombination. As part of the polyprotein, participates in gRNA dimerization, packaging, tRNA incorporation and virion assembly. Its function is as follows. Aspartyl protease that mediates proteolytic cleavages of Gag and Gag-Pol polyproteins during or shortly after the release of the virion from the plasma membrane. Cleavages take place as an ordered, step-wise cascade to yield mature proteins. This process is called maturation. Displays maximal activity during the budding process just prior to particle release from the cell. Also cleaves Nef and Vif, probably concomitantly with viral structural proteins on maturation of virus particles. Hydrolyzes host EIF4GI and PABP1 in order to shut off the capped cellular mRNA translation. The resulting inhibition of cellular protein synthesis serves to ensure maximal viral gene expression and to evade host immune response. Multifunctional enzyme that converts the viral RNA genome into dsDNA in the cytoplasm, shortly after virus entry into the cell. This enzyme displays a DNA polymerase activity that can copy either DNA or RNA templates, and a ribonuclease H (RNase H) activity that cleaves the RNA strand of RNA-DNA heteroduplexes in a partially processive 3' to 5' endonucleasic mode. Conversion of viral genomic RNA into dsDNA requires many steps. A tRNA(3)-Lys binds to the primer-binding site (PBS) situated at the 5'-end of the viral RNA. RT uses the 3' end of the tRNA primer to perform a short round of RNA-dependent minus-strand DNA synthesis. The reading proceeds through the U5 region and ends after the repeated (R) region which is present at both ends of viral RNA. The portion of the RNA-DNA heteroduplex is digested by the RNase H, resulting in a ssDNA product attached to the tRNA primer. This ssDNA/tRNA hybridizes with the identical R region situated at the 3' end of viral RNA. This template exchange, known as minus-strand DNA strong stop transfer, can be either intra- or intermolecular. RT uses the 3' end of this newly synthesized short ssDNA to perform the RNA-dependent minus-strand DNA synthesis of the whole template. RNase H digests the RNA template except for two polypurine tracts (PPTs) situated at the 5'-end and near the center of the genome. It is not clear if both polymerase and RNase H activities are simultaneous. RNase H probably can proceed both in a polymerase-dependent (RNA cut into small fragments by the same RT performing DNA synthesis) and a polymerase-independent mode (cleavage of remaining RNA fragments by free RTs). Secondly, RT performs DNA-directed plus-strand DNA synthesis using the PPTs that have not been removed by RNase H as primers. PPTs and tRNA primers are then removed by RNase H. The 3' and 5' ssDNA PBS regions hybridize to form a circular dsDNA intermediate. Strand displacement synthesis by RT to the PBS and PPT ends produces a blunt ended, linear dsDNA copy of the viral genome that includes long terminal repeats (LTRs) at both ends. Functionally, catalyzes viral DNA integration into the host chromosome, by performing a series of DNA cutting and joining reactions. This enzyme activity takes place after virion entry into a cell and reverse transcription of the RNA genome in dsDNA. The first step in the integration process is 3' processing. This step requires a complex comprising the viral genome, matrix protein, Vpr and integrase. This complex is called the pre-integration complex (PIC). The integrase protein removes 2 nucleotides from each 3' end of the viral DNA, leaving recessed CA OH's at the 3' ends. In the second step, the PIC enters cell nucleus. This process is mediated through integrase and Vpr proteins, and allows the virus to infect a non dividing cell. This ability to enter the nucleus is specific of lentiviruses, other retroviruses cannot and rely on cell division to access cell chromosomes. In the third step, termed strand transfer, the integrase protein joins the previously processed 3' ends to the 5' ends of strands of target cellular DNA at the site of integration. The 5'-ends are produced by integrase-catalyzed staggered cuts, 5 bp apart. A Y-shaped, gapped, recombination intermediate results, with the 5'-ends of the viral DNA strands and the 3' ends of target DNA strands remaining unjoined, flanking a gap of 5 bp. The last step is viral DNA integration into host chromosome. This involves host DNA repair synthesis in which the 5 bp gaps between the unjoined strands are filled in and then ligated. Since this process occurs at both cuts flanking the HIV genome, a 5 bp duplication of host DNA is produced at the ends of HIV-1 integration. Alternatively, Integrase may catalyze the excision of viral DNA just after strand transfer, this is termed disintegration. This Human immunodeficiency virus type 2 subtype B (isolate EHO) (HIV-2) protein is Gag-Pol polyprotein (gag-pol).